A 294-amino-acid polypeptide reads, in one-letter code: Ribosomal RNA small subunit methyltransferase A (294 aa).

6 residues coordinate S-adenosyl-L-methionine: N33, L35, G60, E81, D106, and N131.

The protein belongs to the class I-like SAM-binding methyltransferase superfamily. rRNA adenine N(6)-methyltransferase family. RsmA subfamily.

Its subcellular location is the cytoplasm. The enzyme catalyses adenosine(1518)/adenosine(1519) in 16S rRNA + 4 S-adenosyl-L-methionine = N(6)-dimethyladenosine(1518)/N(6)-dimethyladenosine(1519) in 16S rRNA + 4 S-adenosyl-L-homocysteine + 4 H(+). Functionally, specifically dimethylates two adjacent adenosines (A1518 and A1519) in the loop of a conserved hairpin near the 3'-end of 16S rRNA in the 30S particle. May play a critical role in biogenesis of 30S subunits. This chain is Ribosomal RNA small subunit methyltransferase A, found in Lactococcus lactis subsp. lactis (strain IL1403) (Streptococcus lactis).